The following is a 79-amino-acid chain: Conotoxin Cl9.4 (79 aa).

An N-terminal signal peptide occupies residues 1–23; that stretch reads MNCYLILTVALLLTSAMTGTTTA. The propeptide occupies 24-37; the sequence is GQLNKKGVTLREDD. 3 disulfides stabilise this stretch: C41/C58, C46/C68, and C48/C73.

In terms of tissue distribution, expressed by the venom duct.

It localises to the secreted. The sequence is that of Conotoxin Cl9.4 from Californiconus californicus (California cone).